Consider the following 118-residue polypeptide: Protein TusC (118 aa).

The protein belongs to the DsrF/TusC family. Heterohexamer, formed by a dimer of trimers. The hexameric TusBCD complex contains 2 copies each of TusB, TusC and TusD. The TusBCD complex interacts with TusE.

It is found in the cytoplasm. Functionally, part of a sulfur-relay system required for 2-thiolation of 5-methylaminomethyl-2-thiouridine (mnm(5)s(2)U) at tRNA wobble positions. The sequence is that of Protein TusC from Salmonella arizonae (strain ATCC BAA-731 / CDC346-86 / RSK2980).